The chain runs to 274 residues: Rhamnulose-1-phosphate aldolase (274 aa).

Residue Glu-117 is part of the active site. His-141, His-143, and His-212 together coordinate Zn(2+).

Belongs to the aldolase class II family. RhaD subfamily. Homotetramer. Zn(2+) serves as cofactor.

The protein localises to the cytoplasm. It catalyses the reaction L-rhamnulose 1-phosphate = (S)-lactaldehyde + dihydroxyacetone phosphate. It functions in the pathway carbohydrate degradation; L-rhamnose degradation; glycerone phosphate from L-rhamnose: step 3/3. Functionally, catalyzes the reversible cleavage of L-rhamnulose-1-phosphate to dihydroxyacetone phosphate (DHAP) and L-lactaldehyde. The sequence is that of Rhamnulose-1-phosphate aldolase from Escherichia coli O81 (strain ED1a).